The primary structure comprises 365 residues: Eukaryotic translation initiation factor 3 subunit H (365 aa).

The MPN domain maps to 11–160; that stretch reads VKVEALVVMK…LRAFRLSPKF (150 aa).

It belongs to the eIF-3 subunit H family. Component of the eukaryotic translation initiation factor 3 (eIF-3) complex.

Its subcellular location is the cytoplasm. Component of the eukaryotic translation initiation factor 3 (eIF-3) complex, which is involved in protein synthesis of a specialized repertoire of mRNAs and, together with other initiation factors, stimulates binding of mRNA and methionyl-tRNAi to the 40S ribosome. The eIF-3 complex specifically targets and initiates translation of a subset of mRNAs involved in cell proliferation. This chain is Eukaryotic translation initiation factor 3 subunit H, found in Aspergillus fumigatus (strain CBS 144.89 / FGSC A1163 / CEA10) (Neosartorya fumigata).